The sequence spans 527 residues: Eukaryotic translation initiation factor 4B1 (527 aa).

Disordered stretches follow at residues 1-370 (MAKP…REVV) and 453-527 (FGQR…RQGW). Composition is skewed to low complexity over residues 35–45 (AAAGGAASFPS) and 74–85 (GAAGAPRRVAPA). Composition is skewed to basic and acidic residues over residues 102 to 155 (PRER…DNWG) and 181 to 194 (RSDDIDNWSRDKKP). A Nuclear localization signal motif is present at residues 196–203 (PSRYPSLG). Residues 203 to 232 (GTGGGFRESSGGGFRESSGGGFRESSGGGF) are compositionally biased toward gly residues. Basic and acidic residues predominate over residues 293–317 (KPREEVLAEKGLDWRKMEGEIEKKT). Residues 319–336 (RPTSSHSSRPNSAHSSRP) show a composition bias toward low complexity. Composition is skewed to basic and acidic residues over residues 472 to 485 (EEPHVAVAHMDRPR) and 496 to 510 (PVEERWGFHGSRERG). Over residues 518–527 (SDRSSTRQGW) the composition is skewed to low complexity.

This sequence belongs to the eIF-4 subunit B family. In terms of assembly, homodimer. Nonspherical monomer. mRNA-discriminating component of initiation complexes. In terms of processing, phosphorylated.

It localises to the nucleus. In terms of biological role, promotes the eIF4F and eIF4A RNA-dependent ATP-hydrolysis activity with different efficiency depending on mRNAs, thus providing mRNA discrimination during initiation of translation. The sequence is that of Eukaryotic translation initiation factor 4B1 from Triticum aestivum (Wheat).